Here is a 323-residue protein sequence, read N- to C-terminus: Ankyrin repeat and SOCS box protein 11 (323 aa).

ANK repeat units lie at residues Ala-64–Leu-93, Asn-97–Gly-126, His-130–Phe-159, His-162–His-191, Gln-195–His-224, and Trp-227–Arg-256. The SOCS box domain maps to Val-274–Gln-323.

The protein belongs to the ankyrin SOCS box (ASB) family. Substrate-recognition component of the ECS(ASB11) complex, composed of ASB11, CUL5, ELOB, ELOC and RNF7/RBX2.

Its subcellular location is the endoplasmic reticulum. The protein operates within protein modification; protein ubiquitination. Its function is as follows. Substrate-recognition component of a cullin-5-RING E3 ubiquitin-protein ligase complex (ECS complex, also named CRL5 complex), which mediates the ubiquitination and subsequent proteasomal degradation of target proteins, such as BIK, DIRAS2 and RPN1. The ECS(ASB11) complex acts as a regulator of the endoplasmic reticulum unfolded protein response by mediating ubiquitination and degradation of BIK. This is Ankyrin repeat and SOCS box protein 11 (ASB11) from Pongo abelii (Sumatran orangutan).